The following is a 494-amino-acid chain: UDP-N-acetylmuramoyl-L-alanyl-D-glutamate--L-lysine ligase (494 aa).

Ser30 provides a ligand contact to UDP-N-acetyl-alpha-D-muramoyl-L-alanyl-D-glutamate. 110–116 (GTNGKTS) contacts ATP. UDP-N-acetyl-alpha-D-muramoyl-L-alanyl-D-glutamate-binding positions include 152 to 153 (TT), Ser179, and Arg187. The residue at position 219 (Lys219) is an N6-carboxylysine. An L-lysine recognition motif motif is present at residues 406–409 (DNPA).

Belongs to the MurCDEF family. MurE subfamily. In terms of processing, carboxylation is probably crucial for Mg(2+) binding and, consequently, for the gamma-phosphate positioning of ATP.

Its subcellular location is the cytoplasm. It carries out the reaction UDP-N-acetyl-alpha-D-muramoyl-L-alanyl-D-glutamate + L-lysine + ATP = UDP-N-acetyl-alpha-D-muramoyl-L-alanyl-gamma-D-glutamyl-L-lysine + ADP + phosphate + H(+). It functions in the pathway cell wall biogenesis; peptidoglycan biosynthesis. Its function is as follows. Catalyzes the addition of L-lysine to the nucleotide precursor UDP-N-acetylmuramoyl-L-alanyl-D-glutamate (UMAG) in the biosynthesis of bacterial cell-wall peptidoglycan. This chain is UDP-N-acetylmuramoyl-L-alanyl-D-glutamate--L-lysine ligase, found in Staphylococcus haemolyticus (strain JCSC1435).